A 163-amino-acid chain; its full sequence is Endoribonuclease YbeY (163 aa).

3 residues coordinate Zn(2+): His116, His120, and His126.

This sequence belongs to the endoribonuclease YbeY family. Zn(2+) serves as cofactor.

It is found in the cytoplasm. Its function is as follows. Single strand-specific metallo-endoribonuclease involved in late-stage 70S ribosome quality control and in maturation of the 3' terminus of the 16S rRNA. In Idiomarina loihiensis (strain ATCC BAA-735 / DSM 15497 / L2-TR), this protein is Endoribonuclease YbeY.